We begin with the raw amino-acid sequence, 132 residues long: Small ribosomal subunit protein uS8 (132 aa).

Belongs to the universal ribosomal protein uS8 family. Part of the 30S ribosomal subunit. Contacts proteins S5 and S12.

One of the primary rRNA binding proteins, it binds directly to 16S rRNA central domain where it helps coordinate assembly of the platform of the 30S subunit. The chain is Small ribosomal subunit protein uS8 from Streptomyces griseus subsp. griseus (strain JCM 4626 / CBS 651.72 / NBRC 13350 / KCC S-0626 / ISP 5235).